Here is a 114-residue protein sequence, read N- to C-terminus: uncharacterized protein (114 aa).

This is an uncharacterized protein from Human cytomegalovirus (strain AD169) (HHV-5).